The chain runs to 391 residues: GDSL esterase/lipase 22 (391 aa).

Positions 1 to 29 (MMANNCNLVSVLCVILVLTLFHNPITVAG) are cleaved as a signal peptide. Serine 43 functions as the Nucleophile in the catalytic mechanism. Residues asparagine 105, asparagine 165, and asparagine 288 are each glycosylated (N-linked (GlcNAc...) asparagine). Residues aspartate 322 and histidine 325 contribute to the active site. The interval 372–391 (PATVHASDSSSSTSRGYEYY) is disordered.

It belongs to the 'GDSL' lipolytic enzyme family. Component of the PYK10 complex, at least composed of PYK10/BGLU23, BGLU21, BGLU22, JAL22, JAL23, PBP1/JAL30, PBP2/JAL31, JAL32, JAL33, JAL34, JAL35, GLL22 and GLL23.

The protein resides in the secreted. The chain is GDSL esterase/lipase 22 (GLL22) from Arabidopsis thaliana (Mouse-ear cress).